A 276-amino-acid polypeptide reads, in one-letter code: Acetyl-coenzyme A carboxylase carboxyl transferase subunit beta (276 aa).

Residues L24 to K276 form the CoA carboxyltransferase N-terminal domain. C28, C31, C46, and C49 together coordinate Zn(2+). The segment at C28–C49 adopts a C4-type zinc-finger fold.

It belongs to the AccD/PCCB family. Acetyl-CoA carboxylase is a heterohexamer composed of biotin carboxyl carrier protein (AccB), biotin carboxylase (AccC) and two subunits each of ACCase subunit alpha (AccA) and ACCase subunit beta (AccD). Zn(2+) serves as cofactor.

The protein resides in the cytoplasm. It catalyses the reaction N(6)-carboxybiotinyl-L-lysyl-[protein] + acetyl-CoA = N(6)-biotinyl-L-lysyl-[protein] + malonyl-CoA. It functions in the pathway lipid metabolism; malonyl-CoA biosynthesis; malonyl-CoA from acetyl-CoA: step 1/1. Component of the acetyl coenzyme A carboxylase (ACC) complex. Biotin carboxylase (BC) catalyzes the carboxylation of biotin on its carrier protein (BCCP) and then the CO(2) group is transferred by the transcarboxylase to acetyl-CoA to form malonyl-CoA. The polypeptide is Acetyl-coenzyme A carboxylase carboxyl transferase subunit beta (Pediococcus pentosaceus (strain ATCC 25745 / CCUG 21536 / LMG 10740 / 183-1w)).